The sequence spans 1342 residues: Putative aldehyde oxidase-like protein (1342 aa).

The disordered stretch occupies residues Met-1–Val-23. The 188-residue stretch at Ile-221–Ser-408 folds into the FAD-binding PCMH-type domain.

It belongs to the xanthine dehydrogenase family.

The sequence is that of Putative aldehyde oxidase-like protein from Oryza sativa subsp. japonica (Rice).